A 93-amino-acid chain; its full sequence is Putative aspartate aminotransferase (93 aa).

This sequence belongs to the class-I pyridoxal-phosphate-dependent aminotransferase family. In terms of assembly, homodimer. Pyridoxal 5'-phosphate serves as cofactor.

Its subcellular location is the cytoplasm. It catalyses the reaction L-aspartate + 2-oxoglutarate = oxaloacetate + L-glutamate. The chain is Putative aspartate aminotransferase from Methylorubrum extorquens (Methylobacterium dichloromethanicum).